A 482-amino-acid chain; its full sequence is C3a anaphylatoxin chemotactic receptor (482 aa).

At 1–23 (MASFSAETNSTDLLSQPWNEPPV) the chain is on the extracellular side. An N-linked (GlcNAc...) asparagine glycan is attached at Asn-9. Residues 24-46 (ILSMVILSLTFLLGLPGNGLVLW) form a helical membrane-spanning segment. Residues 47–57 (VAGLKMQRTVN) lie on the Cytoplasmic side of the membrane. The helical transmembrane segment at 58-80 (TIWFLHLTLADLLCCLSLPFSLA) threads the bilayer. Residues 81 to 96 (HLALQGQWPYGRFLCK) lie on the Extracellular side of the membrane. A disulfide bond links Cys-95 and Cys-172. Residues 97–118 (LIPSIIVLNMFASVFLLTAISL) form a helical membrane-spanning segment. Residues 119-139 (DRCLVVFKPIWCQNHRNVGMA) are Cytoplasmic-facing. Residues 140–160 (CSICGCIWVVAFVMCIPVFVY) traverse the membrane as a helical segment. The Extracellular segment spans residues 161–340 (REIFTTDNHN…TPLVAITITR (180 aa)). Residues Tyr-174 and Tyr-184 each carry the sulfotyrosine modification. N-linked (GlcNAc...) asparagine glycosylation is present at Asn-194. Residue Ser-266 is glycosylated (O-linked (GalNAc...) serine). Tyr-318 carries the post-translational modification Sulfotyrosine. A helical membrane pass occupies residues 341-360 (LVVGFLLPSVIMIACYSFIV). Residues 361 to 377 (FRMQRGRFAKSQSKTFR) lie on the Cytoplasmic side of the membrane. Residues 378 to 400 (VAVVVVAVFLVCWTPYHIFGVLS) form a helical membrane-spanning segment. At 401–417 (LLTDPETPLGKTLMSWD) the chain is on the extracellular side. A helical transmembrane segment spans residues 418–438 (HVCIALASANSCFNPFLYALL). The Cytoplasmic portion of the chain corresponds to 439 to 482 (GKDFRKKARQSIQGILEAAFSEELTRSTHCPSNNVISERNSTTV). Ser-459 is subject to Phosphoserine. Thr-463 carries the phosphothreonine modification.

Belongs to the G-protein coupled receptor 1 family. Interacts with VGF-derived peptide TLQP-21. Post-translationally, among the sulfation sites Tyr-174 is essential for binding of C3a anaphylatoxin. O-glycosylated. As to expression, widely expressed in several differentiated hematopoietic cell lines, in the lung, spleen, ovary, placenta, small intestine, throughout the brain, heart, and endothelial cells. Mostly expressed in lymphoid tissues.

It localises to the cell membrane. In terms of biological role, receptor for the chemotactic and inflammatory peptide anaphylatoxin C3a. This receptor stimulates chemotaxis, granule enzyme release and superoxide anion production. This is C3a anaphylatoxin chemotactic receptor (C3AR1) from Homo sapiens (Human).